Reading from the N-terminus, the 363-residue chain is Lipase (363 aa).

An N-terminal signal peptide occupies residues 1-24 (MVLKQRANYLGFLIVFFTAFLVEA). Positions 25–94 (VPIKRQSNST…SYPDSVVQAM (70 aa)) are excised as a propeptide. Residues 33–69 (STVDSLPPLIPSRTSAPSSSPSTTDPEAPAMSRNGPL) form a disordered region. Over residues 43-62 (PSRTSAPSSSPSTTDPEAPA) the composition is skewed to low complexity. Intrachain disulfides connect Cys123–Cys362, Cys134–Cys137, and Cys329–Cys338. Ser238 (nucleophile) is an active-site residue. The Charge relay system role is filled by Asp297. Ca(2+) is bound at residue Asp350. His351 functions as the Charge relay system in the catalytic mechanism.

The protein belongs to the AB hydrolase superfamily. Lipase family.

It catalyses the reaction a triacylglycerol + H2O = a diacylglycerol + a fatty acid + H(+). The protein is Lipase of Rhizomucor miehei.